We begin with the raw amino-acid sequence, 396 residues long: Ribosomal RNA large subunit methyltransferase G (396 aa).

This sequence belongs to the methyltransferase superfamily. RlmG family.

Its subcellular location is the cytoplasm. The catalysed reaction is guanosine(1835) in 23S rRNA + S-adenosyl-L-methionine = N(2)-methylguanosine(1835) in 23S rRNA + S-adenosyl-L-homocysteine + H(+). In terms of biological role, specifically methylates the guanine in position 1835 (m2G1835) of 23S rRNA. The chain is Ribosomal RNA large subunit methyltransferase G from Yersinia enterocolitica serotype O:8 / biotype 1B (strain NCTC 13174 / 8081).